An 805-amino-acid polypeptide reads, in one-letter code: Leucine--tRNA ligase (805 aa).

The short motif at 40 to 51 is the 'HIGH' region element; sequence PYPSGAGLHVGH. A 'KMSKS' region motif is present at residues 576–580; that stretch reads KMSKS. Lysine 579 contributes to the ATP binding site.

This sequence belongs to the class-I aminoacyl-tRNA synthetase family.

Its subcellular location is the cytoplasm. The catalysed reaction is tRNA(Leu) + L-leucine + ATP = L-leucyl-tRNA(Leu) + AMP + diphosphate. The chain is Leucine--tRNA ligase from Geobacillus thermodenitrificans (strain NG80-2).